Reading from the N-terminus, the 258-residue chain is 5'-nucleotidase SurE (258 aa).

Residues Asp8, Asp9, Ser39, and Asn95 each coordinate a divalent metal cation.

This sequence belongs to the SurE nucleotidase family. A divalent metal cation serves as cofactor.

Its subcellular location is the cytoplasm. It carries out the reaction a ribonucleoside 5'-phosphate + H2O = a ribonucleoside + phosphate. Functionally, nucleotidase that shows phosphatase activity on nucleoside 5'-monophosphates. The chain is 5'-nucleotidase SurE from Methanobrevibacter smithii (strain ATCC 35061 / DSM 861 / OCM 144 / PS).